A 214-amino-acid polypeptide reads, in one-letter code: Large ribosomal subunit protein uL3 (214 aa).

The disordered stretch occupies residues Gly133–Gln153. An N5-methylglutamine modification is found at Gln153.

The protein belongs to the universal ribosomal protein uL3 family. As to quaternary structure, part of the 50S ribosomal subunit. Forms a cluster with proteins L14 and L19. Methylated by PrmB.

Its function is as follows. One of the primary rRNA binding proteins, it binds directly near the 3'-end of the 23S rRNA, where it nucleates assembly of the 50S subunit. In Cupriavidus metallidurans (strain ATCC 43123 / DSM 2839 / NBRC 102507 / CH34) (Ralstonia metallidurans), this protein is Large ribosomal subunit protein uL3.